Reading from the N-terminus, the 506-residue chain is DNA nucleotidylexotransferase (506 aa).

The short motif at 11–17 (SQRKRQK) is the Nuclear localization signal element. In terms of domain architecture, BRCT spans 27-124 (GYEIKFNKLV…RPVDLEKKYH (98 aa)). Residues 258–262 (VGVKT) are involved in DNA binding. A 2'-deoxyribonucleoside 5'-triphosphate is bound by residues 333-338 (GFRRGK) and 342-345 (HDID). Positions 343, 345, and 430 each coordinate Mg(2+). 445-446 (GW) serves as a coordination point for a 2'-deoxyribonucleoside 5'-triphosphate.

This sequence belongs to the DNA polymerase type-X family. Mg(2+) is required as a cofactor.

It is found in the nucleus. The catalysed reaction is DNA(n) + a 2'-deoxyribonucleoside 5'-triphosphate = DNA(n+1) + diphosphate. Its function is as follows. Template-independent DNA polymerase which catalyzes the random addition of deoxynucleoside 5'-triphosphate to the 3'-end of a DNA initiator. One of the in vivo functions of this enzyme is the addition of nucleotides at the junction (N region) of rearranged Ig heavy chain and T-cell receptor gene segments during the maturation of B- and T-cells. This is DNA nucleotidylexotransferase (DNTT) from Gallus gallus (Chicken).